We begin with the raw amino-acid sequence, 524 residues long: Cytochrome P450 monooxygenase ankB (524 aa).

The helical transmembrane segment at 22–42 (FHALSIQAPGLLLGTLLFYLF) threads the bilayer. Position 466 (cysteine 466) interacts with heme.

It belongs to the cytochrome P450 family. It depends on heme as a cofactor.

Its subcellular location is the membrane. The enzyme catalyses cyclo(L-arginyl-tyrosyl) + reduced [NADPH--hemoprotein reductase] + O2 = cyclo(L-arginyl-L-dehydrotyrosyl) + oxidized [NADPH--hemoprotein reductase] + 2 H2O + H(+). Its pathway is alkaloid biosynthesis. Functionally, cytochrome P450 monooxygenase; part of the ank cluster that mediates the biosynthesis of NK13650 C, a highly modified cyclo-arginine-tyrosine dipeptide. AnkB is responsible for desaturation of the ankA product cyclo-Arg-Tyr diketopiperazine, likely through hydroxylation of the benzylic position followed by dehydration to yield a dehydro-cyclodipeptide. Within the pathway, the cyclodipeptide synthase ankA acts as the scaffold-generating enzyme and is responsible for formation of the cyclo-Arg-Tyr diketopiperazine (cRY) from L-Arg and L-Tyr. The ankA product cRY is desaturated by the cytochrome P450 monooxygenase ankB to yield a dehydro-cyclodipeptide intermediate. The FAD-dependent monooxygenase ankC then installs the m-OH, ankD catalyzes the attachment of L-homoserine, and ankE ligates citrate to the ankD product to yield NK13650 B. The O-methyltransferase ankF is responsible for methylation of the C-17 phenol group of NK13650 B to produce NK13650 D. Amidation of NK13650 D with L-Asp by ankG then leads to the production of NK13650 C, whereas amidation of NK13650 B produces NK13650 A. This Aspergillus thermomutatus (Neosartorya pseudofischeri) protein is Cytochrome P450 monooxygenase ankB.